Here is a 352-residue protein sequence, read N- to C-terminus: Photosystem II D2 protein (352 aa).

The helical transmembrane segment at 40–60 (TAYLALGGWLTGTTFVTSWYT) threads the bilayer. His-117 provides a ligand contact to chlorophyll a. The helical transmembrane segment at 124–140 (GFMLRQFEIARLVGIRP) threads the bilayer. Pheophytin a-binding residues include Gln-129 and Asn-142. The helical transmembrane segment at 152–165 (VFVSVFLIYPLGQS) threads the bilayer. A chlorophyll a-binding site is contributed by His-197. Residues 207–227 (GALLCAIHGATVENTLFEDGE) traverse the membrane as a helical segment. The a plastoquinone site is built by His-214 and Phe-261. His-214 lines the Fe cation pocket. Position 268 (His-268) interacts with Fe cation. Residues 278–294 (GLWTSSIGIIGLALNLR) traverse the membrane as a helical segment.

This sequence belongs to the reaction center PufL/M/PsbA/D family. As to quaternary structure, PSII is composed of 1 copy each of membrane proteins PsbA, PsbB, PsbC, PsbD, PsbE, PsbF, PsbH, PsbI, PsbJ, PsbK, PsbL, PsbM, PsbT, PsbX, PsbY, PsbZ, Psb30/Ycf12, at least 3 peripheral proteins of the oxygen-evolving complex and a large number of cofactors. It forms dimeric complexes. The cofactor is The D1/D2 heterodimer binds P680, chlorophylls that are the primary electron donor of PSII, and subsequent electron acceptors. It shares a non-heme iron and each subunit binds pheophytin, quinone, additional chlorophylls, carotenoids and lipids. There is also a Cl(-1) ion associated with D1 and D2, which is required for oxygen evolution. The PSII complex binds additional chlorophylls, carotenoids and specific lipids..

It is found in the plastid. It localises to the organellar chromatophore thylakoid membrane. The catalysed reaction is 2 a plastoquinone + 4 hnu + 2 H2O = 2 a plastoquinol + O2. In terms of biological role, photosystem II (PSII) is a light-driven water:plastoquinone oxidoreductase that uses light energy to abstract electrons from H(2)O, generating O(2) and a proton gradient subsequently used for ATP formation. It consists of a core antenna complex that captures photons, and an electron transfer chain that converts photonic excitation into a charge separation. The D1/D2 (PsbA/PsbD) reaction center heterodimer binds P680, the primary electron donor of PSII as well as several subsequent electron acceptors. D2 is needed for assembly of a stable PSII complex. The sequence is that of Photosystem II D2 protein from Paulinella chromatophora.